The following is a 643-amino-acid chain: Phosphomethylpyrimidine synthase (643 aa).

Substrate is bound by residues N248, M277, Y306, H342, 362 to 364 (SRG), 403 to 406 (DGLR), and E442. H446 contributes to the Zn(2+) binding site. Y469 serves as a coordination point for substrate. Residue H510 participates in Zn(2+) binding. Residues C590, C593, and C598 each contribute to the [4Fe-4S] cluster site.

It belongs to the ThiC family. In terms of assembly, homodimer. The cofactor is [4Fe-4S] cluster.

It carries out the reaction 5-amino-1-(5-phospho-beta-D-ribosyl)imidazole + S-adenosyl-L-methionine = 4-amino-2-methyl-5-(phosphooxymethyl)pyrimidine + CO + 5'-deoxyadenosine + formate + L-methionine + 3 H(+). It functions in the pathway cofactor biosynthesis; thiamine diphosphate biosynthesis. In terms of biological role, catalyzes the synthesis of the hydroxymethylpyrimidine phosphate (HMP-P) moiety of thiamine from aminoimidazole ribotide (AIR) in a radical S-adenosyl-L-methionine (SAM)-dependent reaction. This is Phosphomethylpyrimidine synthase from Paraburkholderia phymatum (strain DSM 17167 / CIP 108236 / LMG 21445 / STM815) (Burkholderia phymatum).